A 45-amino-acid polypeptide reads, in one-letter code: Large ribosomal subunit protein bL34 (45 aa).

The tract at residues 1–45 (MTKRTFGGTSRKRKRVSGFRVRMRSHTGRRVIKSRRKRGRERIAV) is disordered. Residues 10 to 45 (SRKRKRVSGFRVRMRSHTGRRVIKSRRKRGRERIAV) show a composition bias toward basic residues.

Belongs to the bacterial ribosomal protein bL34 family.

This chain is Large ribosomal subunit protein bL34, found in Prochlorococcus marinus subsp. pastoris (strain CCMP1986 / NIES-2087 / MED4).